Consider the following 1025-residue polypeptide: Multidrug resistance protein MdtC (1025 aa).

The next 12 helical transmembrane spans lie at 3-23, 333-353, 360-380, 387-407, 431-451, 463-483, 528-548, 853-873, 875-895, 897-917, 953-973, and 984-1004; these read FFALFIYRPVATILLSVAITL, EVEQTLIISVALVILVVFLFL, IIPAVAVPVSLIGTFAAMYLC, LSLMALTIATGFVVDDAIVVL, VGFTVLSMSLSLVAVFLPLLL, FAVTLSVAIGISLLVSLTLTP, LVGVVLLGTIALNIWLYISIP, VILIIAAIATVYIVLGILYES, VHPLTILSTLPSAGVGALLAL, LFNAPFSLIALIGIMLLIGIV, PIMMTTLAALFGALPLVLSGG, and ITIVGGLVMSQLLTLYTTPVV.

The protein belongs to the resistance-nodulation-cell division (RND) (TC 2.A.6) family. MdtC subfamily. As to quaternary structure, part of a tripartite efflux system composed of MdtA, MdtB and MdtC. MdtC forms a heteromultimer with MdtB.

The protein resides in the cell inner membrane. The MdtABC tripartite complex confers resistance against novobiocin and deoxycholate. The polypeptide is Multidrug resistance protein MdtC (Escherichia coli O1:K1 / APEC).